The primary structure comprises 261 residues: Methyltransferase nsrG (261 aa).

Residues 49-141 (DVGAGNGPYA…AHQLRPGALF (93 aa)) are methyltransferase domain.

It belongs to the methyltransferase superfamily.

The protein operates within secondary metabolite biosynthesis. Methyltransferase; part of the gene cluster that mediates the biosynthesis of the tetrahydroxanthone dimer neosartorin, which exhibits antibacterial activity. The two different monomeric units appear to be synthesized by the same set of enzymes, among which the Baeyer-Villiger monooxygenase nsrF is the key enzyme for the divergence of the biosynthetic routes. The pathway begins with the synthesis of atrochrysone thioester by the polyketide synthase nsrB. The atrochrysone carboxyl ACP thioesterase nsrC then breaks the thioester bond and releases the atrochrysone carboxylic acid from AacuL. Atrochrysone carboxylic acid is decarboxylated by the decarboxylase nsrE, and oxidized by the anthrone oxygenase nsrD to yield emodin. Emodin is then reduced to emodin hydroquinone by the oxidoreductase nsrR. A-ring reduction by the short chain dehydrogenase nsrJ, dehydration by the scytalone dehydratase-like protein nsrI and probable spontaneous re-oxidation, results in overall deoxygenation to chrysophanol. The Baeyer-Villiger monooxygenase nsrF accepts chrysophanol as a substrate to insert one oxygen atom at two different positions to yield the precursors of both monomric units. NsrF is promiscuous/flexible in interacting with the 2 (non methylated and methylated) aromatic rings of chrysophanol, thus diverging the biosynthetic pathway at this point. After the hydrolysis of the lactones, methylesterification by the methyltransferase nsrG yields respectively moniliphenone and 2,2',6'-trihydroxy-4-methyl-6-methoxya-cyldiphenylmethanone. The next steps are the hydroxylation by the FAD-dependent monooxygenase nsrK, followed by isomerization by the monooxygenase nsrQ. The short chain dehydrogenase/reductase nsrO then catalyzes the C-5 ketoreduction to give the xanthone skeleton of blennolide C and 5-acetylblennolide A. The acetyltransferase nsrL has a strict substrate specificity and uses only blennolide A but not blennolide C to yield 5-acetylblennolide A as the single-acetylated product. In the final step of the biosynthesis, the heterodimerization of the 2 xanthones, blennolide C and 5-acetylblennolide A, is catalyzed by the cytochrome P450 monooxygenase nsrP. NsrP can utilize at least three different xanthones as its substrates to perform the dimerization reaction. In Aspergillus novofumigatus (strain IBT 16806), this protein is Methyltransferase nsrG.